We begin with the raw amino-acid sequence, 689 residues long: Methionine--tRNA ligase (689 aa).

Positions 15-25 (PYANGPIHLGH) match the 'HIGH' region motif. Residues Cys-146, Cys-149, Cys-159, and Cys-162 each coordinate Zn(2+). The short motif at 332-336 (KMSKS) is the 'KMSKS' region element. Lys-335 contributes to the ATP binding site. Residues 546 to 577 (KDNLQPTEAPKADKKADKKVEKKATTGDPLTD) are disordered. The span at 555-570 (PKADKKADKKVEKKAT) shows a compositional bias: basic and acidic residues. The region spanning 588–689 (DFAKLDLRIA…QGAKPGMRVK (102 aa)) is the tRNA-binding domain.

Belongs to the class-I aminoacyl-tRNA synthetase family. MetG type 1 subfamily. Homodimer. Zn(2+) serves as cofactor.

It localises to the cytoplasm. The enzyme catalyses tRNA(Met) + L-methionine + ATP = L-methionyl-tRNA(Met) + AMP + diphosphate. Functionally, is required not only for elongation of protein synthesis but also for the initiation of all mRNA translation through initiator tRNA(fMet) aminoacylation. The chain is Methionine--tRNA ligase from Shewanella denitrificans (strain OS217 / ATCC BAA-1090 / DSM 15013).